The chain runs to 171 residues: Putative phosphoesterase BPUM_1117 (171 aa).

Catalysis depends on histidine 34, which acts as the Proton donor. Short sequence motifs (HXTX) lie at residues 34–37 (HLTL) and 115–118 (HVTV). The Proton acceptor role is filled by histidine 115.

It belongs to the 2H phosphoesterase superfamily. YjcG family.

The polypeptide is Putative phosphoesterase BPUM_1117 (Bacillus pumilus (strain SAFR-032)).